Consider the following 673-residue polypeptide: Cyclic nucleotide-binding domain-containing protein 2 (673 aa).

The span at 1-15 (MNRSANPEAASSTSH) shows a compositional bias: polar residues. Positions 1 to 89 (MNRSANPEAA…PQPKDRPGVQ (89 aa)) are disordered. A compositionally biased stretch (basic and acidic residues) spans 43-86 (PADKSDTTESKSESGSDSRSEEDKESPASIKEIKAETPQPKDRP). An a nucleoside 3',5'-cyclic phosphate-binding site is contributed by 206–329 (CYRSYTESLQ…ETQYRYNFFR (124 aa)).

In terms of tissue distribution, testis-specific. Exclusively expressed in testicular germ cells while it is not present in mature sperm (at protein level).

The protein localises to the cytoplasm. The protein resides in the cytosol. Essential for male fertility. Plays an important role in spermatogenesis and regulates sperm motility by controlling the development of the flagellar bending of sperm. In Mus musculus (Mouse), this protein is Cyclic nucleotide-binding domain-containing protein 2 (Cnbd2).